Reading from the N-terminus, the 1242-residue chain is DNA polymerase catalytic subunit (1242 aa).

Disordered stretches follow at residues 14–38, 644–665, 877–898, and 1108–1163; these read GAVA…RPPQ, LQSA…SSSS, EGDS…GGSN, and TAPQ…KPPS. Residues 653 to 665 show a composition bias toward low complexity; the sequence is GVSPGSGSNSSSS. Residues 1110–1119 are compositionally biased toward polar residues; that stretch reads PQGSSDNGDS. Basic and acidic residues predominate over residues 1145–1155; it reads ESNRRGGEPAK.

The protein belongs to the DNA polymerase type-B family. In terms of assembly, forms a complex with the ssDNA-binding protein UL57, the DNA polymerase processivity factor UL44, and the alkaline exonuclease UL98. Interacts with the putative helicase-primase complex composed of UL70, UL102 and UL105 proteins; these interactions may coordinate leading and lagging strand DNA synthesis at the replication fork.

The protein resides in the host nucleus. The catalysed reaction is DNA(n) + a 2'-deoxyribonucleoside 5'-triphosphate = DNA(n+1) + diphosphate. Functionally, replicates viral genomic DNA in the late phase of lytic infection, producing long concatemeric DNA. The replication complex is composed of six viral proteins: the DNA polymerase, processivity factor, primase, primase-associated factor, helicase, and ssDNA-binding protein. This Homo sapiens (Human) protein is DNA polymerase catalytic subunit (UL54).